We begin with the raw amino-acid sequence, 661 residues long: 72 kDa type IV collagenase (661 aa).

A signal peptide spans 1-30; the sequence is MTEARVSRGALAALLRALCALGCLLGRAAA. Residues 31-110 constitute a propeptide, activation peptide; that stretch reads APSPIIKFPG…PRCGNPDVAN (80 aa). The Cysteine switch signature appears at 101–108; that stretch reads PRCGNPDV. Zn(2+) is bound at residue C103. Positions 111 to 222 are collagenase-like 1; the sequence is YNFFPRKPKW…LRTLGEGQVV (112 aa). The Ca(2+) site is built by D135 and D169. Residues H179 and D181 each coordinate Zn(2+). D186 and G187 together coordinate Ca(2+). Residue H194 coordinates Zn(2+). Positions 201, 203, and 205 each coordinate Ca(2+). H207 contributes to the Zn(2+) binding site. D209, D210, and E212 together coordinate Ca(2+). The segment at 223–397 is collagen-binding; sequence RVKYGNADGE…WGFCPDQGYS (175 aa). Fibronectin type-II domains are found at residues 229–277, 287–335, and 345–393; these read ADGE…FCPH, ADGQ…FCPE, and SEGA…FCPD. 6 disulfides stabilise this stretch: C234-C260, C248-C275, C292-C318, C306-C333, C350-C376, and C364-C391. Residues 398-466 are collagenase-like 2; sequence LFLVAAHEFG…GPTPTLGPVT (69 aa). Position 404 (H404) interacts with Zn(2+). Residue E405 is part of the active site. Positions 408 and 414 each coordinate Zn(2+). A required for inhibitor TIMP2 binding region spans residues 415–661; that stretch reads SQDPGALMAP…GSIKSDWLGC (247 aa). Hemopexin repeat units follow at residues 469-517, 518-564, 566-614, and 615-661; these read LCKQ…WPEL, PEKI…GLPP, VQKV…WNAI, and PDNL…WLGC. Cysteines 470 and 661 form a disulfide. Ca(2+) contacts are provided by D477, D522, and D570. N-linked (GlcNAc...) asparagine glycosylation is present at N574. A Ca(2+)-binding site is contributed by D619. N643 carries an N-linked (GlcNAc...) asparagine glycan.

This sequence belongs to the peptidase M10A family. In terms of assembly, interacts (via the C-terminal hemopexin-like domains-containing region) with the integrin alpha-V/beta-3; the interaction promotes vascular invasion in angiogenic vessels and melamoma cells. Interacts (via the C-terminal PEX domain) with TIMP2 (via the C-terminal); the interaction inhibits the degradation activity. Interacts with GSK3B. The cofactor is Ca(2+). Zn(2+) serves as cofactor. In terms of processing, phosphorylation on multiple sites modulates enzymatic activity. Phosphorylated by PKC in vitro. Post-translationally, the propeptide is processed by MMP14 (MT-MMP1) and MMP16 (MT-MMP3). Autocatalytic cleavage in the C-terminal produces the anti-angiogenic peptide, PEX. This processing appears to be facilitated by binding integrinv/beta3.

It is found in the secreted. The protein localises to the extracellular space. Its subcellular location is the extracellular matrix. The protein resides in the membrane. It localises to the nucleus. It catalyses the reaction Cleavage of gelatin type I and collagen types IV, V, VII, X. Cleaves the collagen-like sequence Pro-Gln-Gly-|-Ile-Ala-Gly-Gln.. In terms of biological role, ubiquitinous metalloproteinase that is involved in diverse functions such as remodeling of the vasculature, angiogenesis, tissue repair, tumor invasion, inflammation, and atherosclerotic plaque rupture. As well as degrading extracellular matrix proteins, can also act on several nonmatrix proteins such as big endothelial 1 and beta-type CGRP promoting vasoconstriction. Also cleaves KISS at a Gly-|-Leu bond. Appears to have a role in myocardial cell death pathways. Contributes to myocardial oxidative stress by regulating the activity of GSK3beta. Cleaves GSK3beta in vitro. Involved in the formation of the fibrovascular tissues. Its function is as follows. PEX, the C-terminal non-catalytic fragment of MMP2, possesses anti-angiogenic and anti-tumor properties and inhibits cell migration and cell adhesion to FGF2 and vitronectin. Ligand for integrin alpha-v/beta-3 on the surface of blood vessels. This chain is 72 kDa type IV collagenase (MMP2), found in Bos taurus (Bovine).